A 276-amino-acid chain; its full sequence is Small ribosomal subunit protein uS3 (276 aa).

The region spanning 17–86 (VDEYLAKELD…NPQIDVQDVG (70 aa)) is the KH type-2 domain. The tract at residues 193-276 (FQINAPPKEP…AETHGDIQDR (84 aa)) is disordered. Over residues 214–227 (EAEPSQAAETQEQQ) the composition is skewed to low complexity. 2 stretches are compositionally biased toward basic and acidic residues: residues 228–240 (AGEKKSELDRLLD) and 258–276 (PESRTEMSEAETHGDIQDR).

This sequence belongs to the universal ribosomal protein uS3 family. As to quaternary structure, part of the 30S ribosomal subunit.

In terms of biological role, binds the lower part of the 30S subunit head. The polypeptide is Small ribosomal subunit protein uS3 (Methanothrix thermoacetophila (strain DSM 6194 / JCM 14653 / NBRC 101360 / PT) (Methanosaeta thermophila)).